Here is a 753-residue protein sequence, read N- to C-terminus: MSAEVSTTPAADNTVNGTPEATNAAATSAPEVTAVESASPSTTPSASQPHSASLYVGELDPSVTEAMLYELFSSIGQVASIRVCRDAVTRRSLGYAYVNYNNTADGERALEDLNYTLIKGKPCRIMWSQRDPALRKTGQGNVFIKNLDAAIDNKALHDTFAAFGNILSCKVAQDEFGNSKGYGFVHYETAEAANNAIKHVNGMLLNDKKVFVGHHISKKDRQSKFEEMKANFTNVYIKNIDQEVTDEEFRKMFEKFGEITSATLSRDQEGKSRGFGFVNFSTHDSAQAAVDEMNDKEIKGQKLYVGRAQKKHEREEELRKQYEAARLEKASKYQGVNLYVKNLTDDVDDEKLRELFSPFGTITSAKVMRDTVTTGETSESEKEKEKESNKENEKEGEEKTEEKPKESEEEPKKTEKKILGKSKGFGFVCFSSPDEASKAVTEMNQRMVNGKPLYVALAQRKDVRRSQLEASIQARNTIRQQQAAAAAGMPQPYMQPAVFYGPGQQGFIPAGQRGGMPFAPQPGMVMGIPGGRPGQYPGPFPGQQGGRGMGPNQQIPPNFQGIPMGAMQGPGGIPNGMGYPQMAQVQFGRGAGGRGQVPGMPMGQGIRGPGYGQGRGGAPVQGGPRPQGGRGQPAAAPPAAGREEVPATGGLTAQTLSAVPPPQQKQMLGEALYPKIQAQQPELAGKITGMLLEMDNNELLGLLEDEEALRAKVDEALSVYDEYMKNKGEGEAPAESAKPKEDAAETATEENKS.

Over residues 1–26 (MSAEVSTTPAADNTVNGTPEATNAAA) the composition is skewed to polar residues. A disordered region spans residues 1 to 52 (MSAEVSTTPAADNTVNGTPEATNAAATSAPEVTAVESASPSTTPSASQPHSA). Positions 37–52 (SASPSTTPSASQPHSA) are enriched in low complexity. 4 consecutive RRM domains span residues 52–130 (ASLY…WSQR), 140–217 (GNVF…HHIS), 233–310 (TNVY…RAQK), and 336–460 (VNLY…LAQR). 2 disordered regions span residues 367-417 (VMRD…TEKK) and 602-645 (MGQG…REEV). Basic and acidic residues predominate over residues 379-417 (ESEKEKEKESNKENEKEGEEKTEEKPKESEEEPKKTEKK). Over residues 605-631 (GIRGPGYGQGRGGAPVQGGPRPQGGRG) the composition is skewed to gly residues. The 78-residue stretch at 648-725 (TGGLTAQTLS…ALSVYDEYMK (78 aa)) folds into the PABC domain. The disordered stretch occupies residues 728–753 (GEGEAPAESAKPKEDAAETATEENKS). The segment covering 737–753 (AKPKEDAAETATEENKS) has biased composition (basic and acidic residues).

It belongs to the polyadenylate-binding protein type-1 family.

It localises to the cytoplasm. The protein resides in the nucleus. Binds the poly(A) tail of mRNA. Appears to be an important mediator of the multiple roles of the poly(A) tail in mRNA biogenesis, stability and translation. In the nucleus, involved in both mRNA cleavage and polyadenylation. Is also required for efficient mRNA export to the cytoplasm. Acts in concert with a poly(A)-specific nuclease (PAN) to affect poly(A) tail shortening, which may occur concomitantly with either nucleocytoplasmic mRNA transport or translational initiation. In the cytoplasm, stimulates translation initiation and regulates mRNA decay through translation termination-coupled poly(A) shortening, probably mediated by PAN. The protein is Polyadenylate-binding protein, cytoplasmic and nuclear (pab1) of Aspergillus fumigatus (strain ATCC MYA-4609 / CBS 101355 / FGSC A1100 / Af293) (Neosartorya fumigata).